A 254-amino-acid chain; its full sequence is Probable pectate lyase E (254 aa).

The first 17 residues, Met1–Ala17, serve as a signal peptide directing secretion. N-linked (GlcNAc...) asparagine glycosylation occurs at Asn175. A disordered region spans residues Thr227–Cys254.

It belongs to the polysaccharide lyase 3 family. Ca(2+) is required as a cofactor.

Its subcellular location is the secreted. It catalyses the reaction Eliminative cleavage of (1-&gt;4)-alpha-D-galacturonan to give oligosaccharides with 4-deoxy-alpha-D-galact-4-enuronosyl groups at their non-reducing ends.. Functionally, pectinolytic enzyme consist of four classes of enzymes: pectin lyase, polygalacturonase, pectin methylesterase and rhamnogalacturonase. Among pectinolytic enzymes, pectin lyase is the most important in depolymerization of pectin, since it cleaves internal glycosidic bonds of highly methylated pectins. Favors pectate, the anion, over pectin, the methyl ester. The polypeptide is Probable pectate lyase E (plyE) (Neosartorya fischeri (strain ATCC 1020 / DSM 3700 / CBS 544.65 / FGSC A1164 / JCM 1740 / NRRL 181 / WB 181) (Aspergillus fischerianus)).